Reading from the N-terminus, the 190-residue chain is NADH dehydrogenase [ubiquinone] iron-sulfur protein 3 (190 aa).

This sequence belongs to the complex I 30 kDa subunit family. As to quaternary structure, complex I is composed of about 45 different subunits. This is a component of the iron-sulfur (IP) fragment of the enzyme.

The protein localises to the mitochondrion inner membrane. It catalyses the reaction a ubiquinone + NADH + 5 H(+)(in) = a ubiquinol + NAD(+) + 4 H(+)(out). Functionally, core subunit of the mitochondrial membrane respiratory chain NADH dehydrogenase (Complex I) that is believed to belong to the minimal assembly required for catalysis. Complex I functions in the transfer of electrons from NADH to the respiratory chain. The immediate electron acceptor for the enzyme is believed to be ubiquinone. The sequence is that of NADH dehydrogenase [ubiquinone] iron-sulfur protein 3 (NAD9) from Solanum tuberosum (Potato).